The chain runs to 89 residues: Cytochrome b-c1 complex subunit 6, mitochondrial (89 aa).

The transit peptide at Met1–Ser13 directs the protein to the mitochondrion. The segment at Met1–Pro27 is disordered. 2 cysteine pairs are disulfide-bonded: Cys35/Cys79 and Cys51/Cys65. N6-acetyllysine is present on Lys40. The residue at position 83 (Lys83) is an N6-acetyllysine.

The protein belongs to the UQCRH/QCR6 family. As to quaternary structure, component of the ubiquinol-cytochrome c oxidoreductase (cytochrome b-c1 complex, complex III, CIII), a multisubunit enzyme composed of 11 subunits. The complex is composed of 3 respiratory subunits cytochrome b, cytochrome c1 and Rieske protein UQCRFS1, 2 core protein subunits UQCRC1/QCR1 and UQCRC2/QCR2, and 6 low-molecular weight protein subunits UQCRH/QCR6, UQCRB/QCR7, UQCRQ/QCR8, UQCR10/QCR9, UQCR11/QCR10 and subunit 9, the cleavage product of Rieske protein UQCRFS1. The complex exists as an obligatory dimer and forms supercomplexes (SCs) in the inner mitochondrial membrane with NADH-ubiquinone oxidoreductase (complex I, CI) and cytochrome c oxidase (complex IV, CIV), resulting in different assemblies (supercomplex SCI(1)III(2)IV(1) and megacomplex MCI(2)III(2)IV(2)).

The protein resides in the mitochondrion inner membrane. Functionally, component of the ubiquinol-cytochrome c oxidoreductase, a multisubunit transmembrane complex that is part of the mitochondrial electron transport chain which drives oxidative phosphorylation. The respiratory chain contains 3 multisubunit complexes succinate dehydrogenase (complex II, CII), ubiquinol-cytochrome c oxidoreductase (cytochrome b-c1 complex, complex III, CIII) and cytochrome c oxidase (complex IV, CIV), that cooperate to transfer electrons derived from NADH and succinate to molecular oxygen, creating an electrochemical gradient over the inner membrane that drives transmembrane transport and the ATP synthase. The cytochrome b-c1 complex catalyzes electron transfer from ubiquinol to cytochrome c, linking this redox reaction to translocation of protons across the mitochondrial inner membrane, with protons being carried across the membrane as hydrogens on the quinol. In the process called Q cycle, 2 protons are consumed from the matrix, 4 protons are released into the intermembrane space and 2 electrons are passed to cytochrome c. This Rattus norvegicus (Rat) protein is Cytochrome b-c1 complex subunit 6, mitochondrial (Uqcrh).